A 385-amino-acid polypeptide reads, in one-letter code: 1-deoxy-D-xylulose 5-phosphate reductoisomerase (385 aa).

Threonine 10, glycine 11, serine 12, isoleucine 13, lysine 37, and asparagine 124 together coordinate NADPH. Lysine 125 contributes to the 1-deoxy-D-xylulose 5-phosphate binding site. NADPH is bound at residue glutamate 126. Aspartate 150 is a binding site for Mn(2+). Serine 151, glutamate 152, serine 176, and histidine 199 together coordinate 1-deoxy-D-xylulose 5-phosphate. Glutamate 152 is a Mn(2+) binding site. Glycine 205 contributes to the NADPH binding site. 1-deoxy-D-xylulose 5-phosphate contacts are provided by serine 212, asparagine 217, lysine 218, and glutamate 221. Glutamate 221 is a Mn(2+) binding site.

Belongs to the DXR family. The cofactor is Mg(2+). Mn(2+) serves as cofactor.

The catalysed reaction is 2-C-methyl-D-erythritol 4-phosphate + NADP(+) = 1-deoxy-D-xylulose 5-phosphate + NADPH + H(+). It functions in the pathway isoprenoid biosynthesis; isopentenyl diphosphate biosynthesis via DXP pathway; isopentenyl diphosphate from 1-deoxy-D-xylulose 5-phosphate: step 1/6. Its function is as follows. Catalyzes the NADPH-dependent rearrangement and reduction of 1-deoxy-D-xylulose-5-phosphate (DXP) to 2-C-methyl-D-erythritol 4-phosphate (MEP). In Clostridium botulinum (strain 657 / Type Ba4), this protein is 1-deoxy-D-xylulose 5-phosphate reductoisomerase.